A 1159-amino-acid chain; its full sequence is MDSFQFFEWLLRDIERNLLYTSLVYTNPKIAIVRYEPSENAKLWRSKELNTDSPNELLLTLKKTLDECSTLDEKIETLLRIRYFTVYVGDKSDKRNIIRSWLSTTINRLNVEEYASIQEIELQAKQWRAENAKSLRPYHYNIPINEYLRDNEIEVLDTGDNRWKSDTLQGLLPNFYHRTHTLIGAILFAVTSRLEIYSYEQKKALRYLLRTIEKCYNEGYLEMSRDRKWSHTLPELRTLTFRLYNSKVIHAACAMISLVHANPIDYEFLCQVVAVYQIIPANAAKLLSTPMTLYVGVATFSSNQVASTGNASECAPLQIENNIYVSEAQKKEWAESFKSDPLNKSRMLKLMNENLNTTLDKFSLIFNCFSSTFHVGHRIDNAQDAITDQVTATYTSNVNREMYDSYYYKLKQMLKEEIVQYVEDHVAKQYKDVTAESLSALANSSNGFSKEVKFIDRNIKTTKKILHLDNDLITNDYSDLSKALSHGIPMGTRNVPARQTRGIFILPWQVAAVQHTIAESLYKRAKKGAYQGSFAEAYTAKTASLTYGVLAEDTSKATKIILYTDVSQWDASQHNTEPYRSAWINAIREARAELKWRYDDEPKVLEMNVLDSMIKIQEYLLNSNLVVASPGSQRPTKIIRYHGVASGEKTTKIGNSFANVALIETVLDFAKTDIPDLEISHLRVDGDDNVVSINTSCTIDRLQRIIKEKYSSLNARVKALASYTGLEMAKRFIICGKIFERGAIPIFTAERPYGTDVSIQSMCGSSIYSSAVNAYRGFGDAYFSFMQDVLVPPSASTRITGRLRVLMSPVTLYATGPLSFEITPQGLGGRCRFFTQSAKLFTLFKMLTQTAAVSITPDEIKKYAETVQFKKRTEVMIASMQRKLLVPAKALARIIVDKEQQKTLGVPNVQSQKNRSQVSKAIEILGVPERNDIVAKGYYPEELYSLIISHSVVVYTSHSTPISIYRVNCEPVELLRSQLGIRIADSKPIAKPTNHLYDIVSGLSPIKISPSDLLTQAKKYDLSTYKGKRDYLSDLGLVGNTLKTYLASKMLFRDLLMSKYDDLYSTPGFGATQLTTIPLDVTSAEKVFSIRLGLPPHLYEVVMLLLLYEYIHYVFSCKRTFTAQMHAISQEQSAVITKNIILMLDNIQLDQVSFSDDAW.

The RdRp catalytic domain occupies 545 to 727 (LTYGVLAEDT…KALASYTGLE (183 aa)).

Belongs to the reoviridae RNA-directed RNA polymerase family. In terms of assembly, interacts with VP3 (Potential). Interacts with VP2 (Potential). Interacts with NSP5; this interaction is probably necessary for the formation of functional virus factories.

The protein resides in the virion. It carries out the reaction RNA(n) + a ribonucleoside 5'-triphosphate = RNA(n+1) + diphosphate. In terms of biological role, RNA-directed RNA polymerase that is involved in both transcription and genome replication. Together with VP3 capping enzyme, forms an enzyme complex positioned near the channels situated at each of the five-fold vertices of the core. Following infection, the outermost layer of the virus is lost, leaving a double-layered particle (DLP) made up of the core and VP6 shell. VP1 then catalyzes the transcription of fully conservative plus-strand genomic RNAs that are extruded through the DLP's channels into the cytoplasm where they function as mRNAs for translation of viral proteins. One copy of each of the viral (+)RNAs is also recruited during core assembly, together with newly synthesized polymerase complexes and VP2. The polymerase of these novo-formed particles catalyzes the synthesis of complementary minus-strands leading to dsDNA formation. To do so, the polymerase specifically recognizes conserved 3' sequence(s) in plus-strand RNA templates. Once dsRNA synthesis is complete, the polymerase switches to the transcriptional mode, thus providing secondary transcription. The sequence is that of RNA-directed RNA polymerase from Homo sapiens (Human).